The sequence spans 474 residues: Bifunctional protein HldE (474 aa).

The interval 1–318 is ribokinase; sequence MKLSMPRFDQ…RAVQREQGSE (318 aa). 194–197 contacts ATP; the sequence is NLSE. The active site involves Asp-263. Positions 343–474 are cytidylyltransferase; sequence FTNGCFDILH…AIVEKIRQKG (132 aa).

In the N-terminal section; belongs to the carbohydrate kinase PfkB family. This sequence in the C-terminal section; belongs to the cytidylyltransferase family. Homodimer.

It catalyses the reaction D-glycero-beta-D-manno-heptose 7-phosphate + ATP = D-glycero-beta-D-manno-heptose 1,7-bisphosphate + ADP + H(+). It carries out the reaction D-glycero-beta-D-manno-heptose 1-phosphate + ATP + H(+) = ADP-D-glycero-beta-D-manno-heptose + diphosphate. It functions in the pathway nucleotide-sugar biosynthesis; ADP-L-glycero-beta-D-manno-heptose biosynthesis; ADP-L-glycero-beta-D-manno-heptose from D-glycero-beta-D-manno-heptose 7-phosphate: step 1/4. Its pathway is nucleotide-sugar biosynthesis; ADP-L-glycero-beta-D-manno-heptose biosynthesis; ADP-L-glycero-beta-D-manno-heptose from D-glycero-beta-D-manno-heptose 7-phosphate: step 3/4. Functionally, catalyzes the phosphorylation of D-glycero-D-manno-heptose 7-phosphate at the C-1 position to selectively form D-glycero-beta-D-manno-heptose-1,7-bisphosphate. Its function is as follows. Catalyzes the ADP transfer from ATP to D-glycero-beta-D-manno-heptose 1-phosphate, yielding ADP-D-glycero-beta-D-manno-heptose. This chain is Bifunctional protein HldE, found in Pseudomonas aeruginosa (strain UCBPP-PA14).